A 275-amino-acid chain; its full sequence is Fos-related antigen 1 (275 aa).

2 disordered regions span residues 1 to 33 (MYRD…QTVQ) and 71 to 115 (TYPQ…VRRE). Residues 7–33 (EPGPSSGAGSAYGRPAQPQQAQTQTVQ) are compositionally biased toward low complexity. Residues 107 to 170 (EERRRVRRER…ERLELVLEAH (64 aa)) form the bZIP domain. The segment at 109–129 (RRRVRRERNKLAAAKCRNRRK) is basic motif. A leucine-zipper region spans residues 135–163 (LQAETDKLEDEKSGLQREIEELQKQKERL). Residues 171-184 (RPICKIPEEDKKDT) show a composition bias toward basic and acidic residues. The interval 171 to 275 (RPICKIPEED…PLGSPTLLAL (105 aa)) is disordered. Low complexity-rich tracts occupy residues 185–194 (GGTSSTSGAG), 219–237 (LHTP…TPSL), and 256–275 (SSSS…LLAL). S269 is modified (phosphoserine).

This sequence belongs to the bZIP family. Fos subfamily. As to quaternary structure, heterodimer. Interacts with the BAF multiprotein chromatin-remodeling complex subunits SMARCB1 and SMARCD1. Interacts with ARID1A and JUN.

It localises to the nucleus. This Rattus norvegicus (Rat) protein is Fos-related antigen 1 (Fosl1).